A 286-amino-acid chain; its full sequence is ATP synthase gamma chain (286 aa).

Belongs to the ATPase gamma chain family. F-type ATPases have 2 components, CF(1) - the catalytic core - and CF(0) - the membrane proton channel. CF(1) has five subunits: alpha(3), beta(3), gamma(1), delta(1), epsilon(1). CF(0) has three main subunits: a, b and c.

It is found in the cell inner membrane. Its function is as follows. Produces ATP from ADP in the presence of a proton gradient across the membrane. The gamma chain is believed to be important in regulating ATPase activity and the flow of protons through the CF(0) complex. The chain is ATP synthase gamma chain from Leptospira borgpetersenii serovar Hardjo-bovis (strain JB197).